We begin with the raw amino-acid sequence, 303 residues long: Phosphate import ATP-binding protein PstB (303 aa).

The ABC transporter domain occupies 56-298; that stretch reads LSTSDVHVYY…PDHQLTEAYI (243 aa). Position 88–95 (88–95) interacts with ATP; it reads GPSGCGKS.

It belongs to the ABC transporter superfamily. Phosphate importer (TC 3.A.1.7) family. In terms of assembly, the complex is composed of two ATP-binding proteins (PstB), two transmembrane proteins (PstC and PstA) and a solute-binding protein (PstS).

Its subcellular location is the cell inner membrane. The enzyme catalyses phosphate(out) + ATP + H2O = ADP + 2 phosphate(in) + H(+). Its function is as follows. Part of the ABC transporter complex PstSACB involved in phosphate import. Responsible for energy coupling to the transport system. The polypeptide is Phosphate import ATP-binding protein PstB (Acinetobacter baylyi (strain ATCC 33305 / BD413 / ADP1)).